Here is a 150-residue protein sequence, read N- to C-terminus: Large ribosomal subunit protein bL9 (150 aa).

It belongs to the bacterial ribosomal protein bL9 family.

Binds to the 23S rRNA. The chain is Large ribosomal subunit protein bL9 from Verminephrobacter eiseniae (strain EF01-2).